A 1022-amino-acid polypeptide reads, in one-letter code: Sodium/potassium-transporting ATPase subunit alpha-1 (1022 aa).

Positions 1–5 are excised as a propeptide; it reads MGRGT. Positions 1–10 are enriched in basic and acidic residues; that stretch reads MGRGTGHDQY. The segment at 1 to 34 is disordered; sequence MGRGTGHDQYELAATSEGGRKKKRDKKKKDMDDL. Residues 6–86 are Cytoplasmic-facing; that stretch reads GHDQYELAAT…NALTPPPTTP (81 aa). Phosphoserine; by PKC is present on Ser-16. The interaction with phosphoinositide-3 kinase stretch occupies residues 81–83; it reads PPP. A helical membrane pass occupies residues 87-107; sequence EWVKFCRQLFGGFSMLLWIGA. The Extracellular portion of the chain corresponds to 108-130; it reads ILCFLAYGIQAASEDEPANDNLY. The chain crosses the membrane as a helical span at residues 131–151; sequence LGVVLSAVVIITGCFSYYQEA. Topologically, residues 152–287 are cytoplasmic; the sequence is KSSRIMDSFK…VGRTPISIEI (136 aa). Positions 213 to 234 are disordered; the sequence is DNSSLTGESEPQTRSPDFSNEN. A helical transmembrane segment spans residues 288 to 307; sequence EHFIHIITGVAVFLGVSFFI. The Extracellular portion of the chain corresponds to 308–319; that stretch reads LSLILGYAWLEA. A helical membrane pass occupies residues 320 to 337; it reads VIFLIGIIVANVPEGLLA. The Cytoplasmic segment spans residues 338-771; the sequence is TVTVCLTLTA…EEGRLIFDNL (434 aa). The active-site 4-aspartylphosphate intermediate is the Asp-375. Position 486 (Lys-486) interacts with ATP. 2 residues coordinate Mg(2+): Asp-716 and Asp-720. The helical transmembrane segment at 772-791 threads the bilayer; it reads KKSIAYTLTSNIPEITPFLL. Over 792–801 the chain is Extracellular; that stretch reads FIIANIPLPL. Residues 802–822 form a helical membrane-spanning segment; that stretch reads GTVTILCIDLGTDMVPAISLA. Residues 823-842 lie on the Cytoplasmic side of the membrane; sequence YEAAESDIMKRQPRNPRTDK. A helical transmembrane segment spans residues 843 to 865; sequence LVNERLISIAYGQIGMMQATAGF. The Extracellular segment spans residues 866-917; the sequence is FTYFVILAENGFLPSTLLGIRVKWDDKYVNDLEDSYGQQWTYEQRKIVEYTC. A helical transmembrane segment spans residues 918-937; the sequence is HTSFFASIVIVQWADLIICK. Over 938–950 the chain is Cytoplasmic; that stretch reads TRRNSIIQQGMKN. The residue at position 942 (Ser-942) is a Phosphoserine; by PKA. Residues 951-969 traverse the membrane as a helical segment; the sequence is KILIFGLFEETALAAFLSY. Topologically, residues 970–984 are extracellular; it reads CPGMDVALRMYPLKP. Residues 985–1005 form a helical membrane-spanning segment; sequence SWWFCAFPYSLLIFLYDEARR. Topologically, residues 1006–1022 are cytoplasmic; that stretch reads FILRRNPDGWVERETYY.

It belongs to the cation transport ATPase (P-type) (TC 3.A.3) family. Type IIC subfamily. In terms of assembly, the sodium/potassium-transporting ATPase is composed of a catalytic alpha subunit, an auxiliary non-catalytic beta subunit and an additional regulatory subunit.

The protein localises to the cell membrane. The protein resides in the sarcolemma. The catalysed reaction is K(+)(out) + Na(+)(in) + ATP + H2O = K(+)(in) + Na(+)(out) + ADP + phosphate + H(+). This is the catalytic component of the active enzyme, which catalyzes the hydrolysis of ATP coupled with the exchange of sodium and potassium ions across the plasma membrane. This action creates the electrochemical gradient of sodium and potassium ions, providing the energy for active transport of various nutrients. In Anguilla anguilla (European freshwater eel), this protein is Sodium/potassium-transporting ATPase subunit alpha-1 (atp1a1).